A 421-amino-acid polypeptide reads, in one-letter code: 4-hydroxy-3-methylbut-2-en-1-yl diphosphate synthase (flavodoxin) (421 aa).

4 residues coordinate [4Fe-4S] cluster: C311, C314, C357, and E364.

It belongs to the IspG family. Requires [4Fe-4S] cluster as cofactor.

The catalysed reaction is (2E)-4-hydroxy-3-methylbut-2-enyl diphosphate + oxidized [flavodoxin] + H2O + 2 H(+) = 2-C-methyl-D-erythritol 2,4-cyclic diphosphate + reduced [flavodoxin]. Its pathway is isoprenoid biosynthesis; isopentenyl diphosphate biosynthesis via DXP pathway; isopentenyl diphosphate from 1-deoxy-D-xylulose 5-phosphate: step 5/6. Its function is as follows. Converts 2C-methyl-D-erythritol 2,4-cyclodiphosphate (ME-2,4cPP) into 1-hydroxy-2-methyl-2-(E)-butenyl 4-diphosphate. The polypeptide is 4-hydroxy-3-methylbut-2-en-1-yl diphosphate synthase (flavodoxin) (Xanthomonas euvesicatoria pv. vesicatoria (strain 85-10) (Xanthomonas campestris pv. vesicatoria)).